A 305-amino-acid polypeptide reads, in one-letter code: Superkiller complex protein 8 (305 aa).

Met-1 is subject to N-acetylmethionine. Thr-2 carries the N-acetylthreonine; in WD repeat-containing protein 61, N-terminally processed modification. 7 WD repeats span residues 14–57, 62–101, 104–143, 146–187, 188–227, 230–269, and 272–305; these read AHDD…LELQ, GHQLGVVSVDISHTLPIAASSSLDAHIRLWDLENGKQMKS, AGPVDAWTLAFSPDSQHLATGTHMGKVNIFGVESGKKEYS, TRGK…HTLE, GHAMPIRSLTFSPDSQLLVTASDDGYIKIYDVQHANLAGT, GHASWVLNVAFCPDDTHFVSSSSDKSVKVWDVGTRTCIHT, and DHQDQVWGVKYNGNGSKIVSVGDDQEIHVYDCPI.

The protein belongs to the SKI8 family. In terms of assembly, component of the PAF1 complex, which consists of CDC73, PAF1, LEO1, CTR9, RTF1 and SKIC8. The PAF1 complex interacts with PHF5A. Within the PAF1 complex interacts directly with PHF5A. Component of the SKI complex which consists of SKIC2, SKIC3 and SKIC8.

The protein localises to the nucleus. The protein resides in the cytoplasm. Its function is as follows. Component of the PAF1 complex (PAF1C) which has multiple functions during transcription by RNA polymerase II and is implicated in regulation of development and maintenance of embryonic stem cell pluripotency. PAF1C associates with RNA polymerase II through interaction with POLR2A CTD non-phosphorylated and 'Ser-2'- and 'Ser-5'-phosphorylated forms and is involved in transcriptional elongation, acting both independently and synergistically with TCEA1 and in cooperation with the DSIF complex and HTATSF1. PAF1C is required for transcription of Hox and Wnt target genes. PAF1C is involved in hematopoiesis and stimulates transcriptional activity of KMT2A/MLL1; it promotes leukemogenesis through association with KMT2A/MLL1-rearranged oncoproteins, such as KMT2A/MLL1-MLLT3/AF9 and KMT2A/MLL1-MLLT1/ENL. PAF1C is involved in histone modifications such as ubiquitination of histone H2B and methylation on histone H3 'Lys-4' (H3K4me3). PAF1C recruits the RNF20/40 E3 ubiquitin-protein ligase complex and the E2 enzyme UBE2A or UBE2B to chromatin which mediate monoubiquitination of 'Lys-120' of histone H2B (H2BK120ub1); UB2A/B-mediated H2B ubiquitination is proposed to be coupled to transcription. PAF1C is involved in mRNA 3' end formation probably through association with cleavage and poly(A) factors. In case of infection by influenza A strain H3N2, PAF1C associates with viral NS1 protein, thereby regulating gene transcription. Required for mono- and trimethylation on histone H3 'Lys-4' (H3K4me3), dimethylation on histone H3 'Lys-79' (H3K4me3). Required for Hox gene transcription. Also acts as a component of the SKI complex, a multiprotein complex that assists the RNA-degrading exosome during the mRNA decay and quality-control pathways. The SKI complex catalyzes mRNA extraction from 80S ribosomal complexes in the 3'-5' direction and channels mRNA to the cytosolic exosome for degradation. SKI-mediated extraction of mRNA from stalled ribosomes allow binding of the Pelota-HBS1L complex and subsequent ribosome disassembly by ABCE1 for ribosome recycling. The sequence is that of Superkiller complex protein 8 (Skic8) from Rattus norvegicus (Rat).